The following is a 432-amino-acid chain: 5-methylthioadenosine/S-adenosylhomocysteine deaminase (432 aa).

Positions 62 and 64 each coordinate Zn(2+). Glu91 and His184 together coordinate substrate. Residue His211 participates in Zn(2+) binding. The substrate site is built by Glu214 and Asp299. Asp299 contributes to the Zn(2+) binding site.

This sequence belongs to the metallo-dependent hydrolases superfamily. MTA/SAH deaminase family. It depends on Zn(2+) as a cofactor.

The enzyme catalyses S-adenosyl-L-homocysteine + H2O + H(+) = S-inosyl-L-homocysteine + NH4(+). It catalyses the reaction S-methyl-5'-thioadenosine + H2O + H(+) = S-methyl-5'-thioinosine + NH4(+). Functionally, catalyzes the deamination of 5-methylthioadenosine and S-adenosyl-L-homocysteine into 5-methylthioinosine and S-inosyl-L-homocysteine, respectively. Is also able to deaminate adenosine. This Haloarcula marismortui (strain ATCC 43049 / DSM 3752 / JCM 8966 / VKM B-1809) (Halobacterium marismortui) protein is 5-methylthioadenosine/S-adenosylhomocysteine deaminase.